We begin with the raw amino-acid sequence, 332 residues long: uncharacterized protein (332 aa).

The chain crosses the membrane as a helical span at residues 185-205 (MVYGYSVFNAFFILLALPNVI).

It localises to the host membrane. This is an uncharacterized protein from Sulfolobus islandicus filamentous virus (isolate Iceland/Hveragerdi) (SIFV).